The chain runs to 358 residues: 3-ketosteroid-9-alpha-monooxygenase, ferredoxin reductase component (358 aa).

Residues 12 to 124 (DHVLELQIAE…LAPSGNFVPT (113 aa)) form the FAD-binding FR-type domain. The 90-residue stretch at 269 to 358 (ATAVVELDGQ…SDSVEVTYDE (90 aa)) folds into the 2Fe-2S ferredoxin-type domain. 4 residues coordinate [2Fe-2S] cluster: C305, C310, C313, and C343.

As to quaternary structure, monomer. The two-component system 3-ketosteroid-9-alpha-monooxygenase is composed of an oxygenase component KshA and a reductase component KshB. It depends on FAD as a cofactor. [2Fe-2S] cluster serves as cofactor.

It catalyses the reaction androsta-1,4-diene-3,17-dione + 2 reduced [2Fe-2S]-[ferredoxin] + O2 + 2 H(+) = 9alpha-hydroxyandrosta-1,4-diene-3,17-dione + 2 oxidized [2Fe-2S]-[ferredoxin] + H2O. It functions in the pathway lipid metabolism; steroid biosynthesis. Involved in the degradation of cholesterol. Catalyzes the introduction of a 9a-hydroxyl moiety into 1,4-androstadiene-3,17-dione (ADD) to yield the 9alpha-hydroxy-1,4-androstadiene-3,17-dione (9OHADD) intermediate which spontaneously form 3-hydroxy-9,10-seconandrost-1,3,5(10)-triene-9,17-dione (HSA) via the meta-cleavage of ring B with concomitant aromatization of ring A. The sequence is that of 3-ketosteroid-9-alpha-monooxygenase, ferredoxin reductase component (hmp) from Mycobacterium tuberculosis (strain CDC 1551 / Oshkosh).